Reading from the N-terminus, the 338-residue chain is tRNA N6-adenosine threonylcarbamoyltransferase (338 aa).

The Fe cation site is built by histidine 111 and histidine 115. Residues leucine 134–glycine 138, aspartate 167, glycine 180, and asparagine 272 each bind substrate. Residue aspartate 300 participates in Fe cation binding.

It belongs to the KAE1 / TsaD family. The cofactor is Fe(2+).

The protein resides in the cytoplasm. It carries out the reaction L-threonylcarbamoyladenylate + adenosine(37) in tRNA = N(6)-L-threonylcarbamoyladenosine(37) in tRNA + AMP + H(+). Required for the formation of a threonylcarbamoyl group on adenosine at position 37 (t(6)A37) in tRNAs that read codons beginning with adenine. Is involved in the transfer of the threonylcarbamoyl moiety of threonylcarbamoyl-AMP (TC-AMP) to the N6 group of A37, together with TsaE and TsaB. TsaD likely plays a direct catalytic role in this reaction. The protein is tRNA N6-adenosine threonylcarbamoyltransferase of Shewanella baltica (strain OS155 / ATCC BAA-1091).